An 882-amino-acid polypeptide reads, in one-letter code: DNA mismatch repair protein MutS (882 aa).

629 to 636 (GPNMGGKS) is an ATP binding site.

The protein belongs to the DNA mismatch repair MutS family.

Its function is as follows. This protein is involved in the repair of mismatches in DNA. It is possible that it carries out the mismatch recognition step. This protein has a weak ATPase activity. This chain is DNA mismatch repair protein MutS, found in Ralstonia nicotianae (strain ATCC BAA-1114 / GMI1000) (Ralstonia solanacearum).